The sequence spans 106 residues: Large ribosomal subunit protein eL36 (106 aa).

Residues 75 to 93 (VRQEKVGHSQESKEEERGD) are compositionally biased toward basic and acidic residues. The segment at 75 to 106 (VRQEKVGHSQESKEEERGDVQCSPPDEGWWWY) is disordered.

This sequence belongs to the eukaryotic ribosomal protein eL36 family.

This is Large ribosomal subunit protein eL36 (RPL36) from Daucus carota (Wild carrot).